Consider the following 597-residue polypeptide: Ribosomal oxygenase 1 (597 aa).

At Met1 the chain carries N-acetylmethionine. The segment at 1–138 (MDELPNGNGA…HVDDPERPWD (138 aa)) is disordered. Composition is skewed to basic residues over residues 14-24 (KRGRGRRRRQP) and 37-48 (RPRKVRRHRKSA). The segment covering 49–62 (ASRVAALRARALLS) has biased composition (low complexity). 2 positions are modified to phosphoserine: Ser62 and Ser65. Over residues 72 to 81 (VRGKRERPAE) the composition is skewed to basic and acidic residues. At Ser86 the chain carries Phosphoserine. A JmjC domain is found at 250–395 (CSLRLLCPQA…DFLEAVLPLA (146 aa)). Residues His296, Asp298, and His361 each contribute to the Fe cation site.

The protein belongs to the ROX family. NO66 subfamily. Interacts with SP7/OSX; the interaction is direct. Interacts with MYC. Interacts with PHF19; leading to its recruitment to H3K36me3 sites. Requires Fe(2+) as cofactor.

Its subcellular location is the nucleus. The protein resides in the nucleolus. The protein localises to the nucleoplasm. It catalyses the reaction N(6),N(6)-dimethyl-L-lysyl(36)-[histone H3] + 2 2-oxoglutarate + 2 O2 = L-lysyl(36)-[histone H3] + 2 formaldehyde + 2 succinate + 2 CO2. The enzyme catalyses N(6)-methyl-L-lysyl-[protein] + 2-oxoglutarate + O2 = L-lysyl-[protein] + formaldehyde + succinate + CO2. The catalysed reaction is L-histidyl-[protein] + 2-oxoglutarate + O2 = (3S)-3-hydroxy-L-histidyl-[protein] + succinate + CO2. Its function is as follows. Oxygenase that can act as both a histone lysine demethylase and a ribosomal histidine hydroxylase. Specifically demethylates 'Lys-4' (H3K4me) and 'Lys-36' (H3K36me) of histone H3, thereby playing a central role in histone code. Preferentially demethylates trimethylated H3 'Lys-4' (H3K4me3) and monomethylated H3 'Lys-4' (H3K4me1) residues, while it has weaker activity for dimethylated H3 'Lys-36' (H3K36me2). Acts as a regulator of osteoblast differentiation via its interaction with SP7/OSX by demethylating H3K4me and H3K36me, thereby inhibiting SP7/OSX-mediated promoter activation. Also catalyzes demethylation of non-histone proteins, such as CGAS: demethylation of monomethylated CGAS promotes interaction between CGAS and PARP1, followed by PARP1 inactivation. Also catalyzes the hydroxylation of 60S ribosomal protein L8 on 'His-216', thereby playing a role in ribosome biogenesis. Participates in MYC-induced transcriptional activation. The polypeptide is Ribosomal oxygenase 1 (Rattus norvegicus (Rat)).